The primary structure comprises 52 residues: Rubredoxin (52 aa).

Positions 1 to 52 constitute a Rubredoxin-like domain; it reads MKKYVCTVCGYEYDPAEGDPDNGVKPGTSFDDLPADWVCPVCGAPKSEFEAA. Fe cation-binding residues include cysteine 6, cysteine 9, cysteine 39, and cysteine 42.

Belongs to the rubredoxin family. Fe(3+) is required as a cofactor.

The protein resides in the cytoplasm. Rubredoxin is a small nonheme, iron protein lacking acid-labile sulfide. Its single Fe, chelated to 4 Cys, functions as an electron acceptor and may also stabilize the conformation of the molecule. Its function is as follows. Electron acceptor for cytoplasmic lactate dehydrogenase. The sequence is that of Rubredoxin (rub) from Nitratidesulfovibrio vulgaris (strain ATCC 29579 / DSM 644 / CCUG 34227 / NCIMB 8303 / VKM B-1760 / Hildenborough) (Desulfovibrio vulgaris).